A 499-amino-acid polypeptide reads, in one-letter code: Glycerol kinase (499 aa).

Thr-17 contacts ADP. 3 residues coordinate ATP: Thr-17, Thr-18, and Ser-19. Thr-17 provides a ligand contact to sn-glycerol 3-phosphate. Arg-21 contacts ADP. Residues Arg-87, Glu-88, Tyr-139, and Asp-243 each contribute to the sn-glycerol 3-phosphate site. Residues Arg-87, Glu-88, Tyr-139, Asp-243, and Gln-244 each contribute to the glycerol site. Thr-265 and Gly-308 together coordinate ADP. Residues Thr-265, Gly-308, Gln-312, and Gly-409 each coordinate ATP. Gly-409 and Asn-413 together coordinate ADP.

It belongs to the FGGY kinase family.

It catalyses the reaction glycerol + ATP = sn-glycerol 3-phosphate + ADP + H(+). The protein operates within polyol metabolism; glycerol degradation via glycerol kinase pathway; sn-glycerol 3-phosphate from glycerol: step 1/1. Inhibited by fructose 1,6-bisphosphate (FBP). Functionally, key enzyme in the regulation of glycerol uptake and metabolism. Catalyzes the phosphorylation of glycerol to yield sn-glycerol 3-phosphate. The chain is Glycerol kinase from Pseudomonas putida (strain GB-1).